A 216-amino-acid polypeptide reads, in one-letter code: Protein-L-isoaspartate O-methyltransferase (216 aa).

S66 is an active-site residue.

This sequence belongs to the methyltransferase superfamily. L-isoaspartyl/D-aspartyl protein methyltransferase family.

The protein resides in the cytoplasm. It carries out the reaction [protein]-L-isoaspartate + S-adenosyl-L-methionine = [protein]-L-isoaspartate alpha-methyl ester + S-adenosyl-L-homocysteine. Functionally, catalyzes the methyl esterification of L-isoaspartyl residues in peptides and proteins that result from spontaneous decomposition of normal L-aspartyl and L-asparaginyl residues. It plays a role in the repair and/or degradation of damaged proteins. In Dechloromonas aromatica (strain RCB), this protein is Protein-L-isoaspartate O-methyltransferase.